A 147-amino-acid polypeptide reads, in one-letter code: Mid1-interacting protein 1-B (147 aa).

The protein belongs to the SPOT14 family.

The protein localises to the nucleus. It localises to the cytoplasm. Its subcellular location is the cytoskeleton. In terms of biological role, involved in stabilization of microtubules. May play a role in the regulation of lipogenesis. The sequence is that of Mid1-interacting protein 1-B from Danio rerio (Zebrafish).